A 338-amino-acid chain; its full sequence is D-erythrose-4-phosphate dehydrogenase (338 aa).

An NAD(+)-binding site is contributed by 11-12 (RI). Residues 153–155 (SCT), arginine 199, 212–213 (TK), and arginine 235 each bind substrate. Cysteine 154 acts as the Nucleophile in catalysis. An NAD(+)-binding site is contributed by asparagine 317.

This sequence belongs to the glyceraldehyde-3-phosphate dehydrogenase family. Epd subfamily. Homotetramer.

It is found in the cytoplasm. The enzyme catalyses D-erythrose 4-phosphate + NAD(+) + H2O = 4-phospho-D-erythronate + NADH + 2 H(+). The protein operates within cofactor biosynthesis; pyridoxine 5'-phosphate biosynthesis; pyridoxine 5'-phosphate from D-erythrose 4-phosphate: step 1/5. Its function is as follows. Catalyzes the NAD-dependent conversion of D-erythrose 4-phosphate to 4-phosphoerythronate. The sequence is that of D-erythrose-4-phosphate dehydrogenase from Shewanella amazonensis (strain ATCC BAA-1098 / SB2B).